Consider the following 514-residue polypeptide: MSLTEEIKKRRTFAIISHPDAGKTTITEQLLYFGGEIREAGTVKGKKSGTFAKSDWMDIEKQRGISVTSSVMQFDYAGKRVNILDTPGHEDFSEDTYRTLMAVDAAIMVVDSAKGIEAQTKKLFEVVKHRNIPVFTFINKLDRDGREPLELLEELEEVLGIASYPMNWPIGMGRAFEGLYDLHNKRLELYKGDERFASIEDGDQLFANNPFYEQVKEDIELLQEAGNDFSEQAILDGDLTPVFFGSALTNFGVQTFLDTFLEFAPEPHGHKTTEGNVVDPLAKDFSGFVFKIQANMDPKHRDRIAFVRIVSGEFERGMGVNLTRTGKGAKLSNVTQFMAESRENVTNAVAGDIIGVYDTGTYQVGDTLTVGKNKFEFEPLPTFTPEIFMKVSPKNVMKQKSFHKGIEQLVQEGAIQLYKNYQTGEYMLGAVGQLQFEVFKHRMEGEYNAEVVMTPMGKKTVRWISEDDLDQRMSSSRNILAKDRFDQPVFLFENDFALRWFADKYPDVTLEEKM.

One can recognise a tr-type G domain in the interval Lys8 to His268. GTP-binding positions include Ser17–Thr24, Asp85–His89, and Asn139–Asp142.

Belongs to the TRAFAC class translation factor GTPase superfamily. Classic translation factor GTPase family. PrfC subfamily.

Its subcellular location is the cytoplasm. Its function is as follows. Increases the formation of ribosomal termination complexes and stimulates activities of RF-1 and RF-2. It binds guanine nucleotides and has strong preference for UGA stop codons. It may interact directly with the ribosome. The stimulation of RF-1 and RF-2 is significantly reduced by GTP and GDP, but not by GMP. The polypeptide is Peptide chain release factor 3 (Streptococcus pyogenes serotype M2 (strain MGAS10270)).